The following is a 180-amino-acid chain: Inner membrane-spanning protein YciB (180 aa).

6 helical membrane-spanning segments follow: residues 4–24, 25–45, 52–72, 76–96, 118–138, and 150–170; these read LLSE…GGGI, QHAT…CYVI, LSII…ISGN, IKIK…MSGI, ITLS…NEVV, and FKVF…LPLL.

The protein belongs to the YciB family.

The protein resides in the cell inner membrane. Plays a role in cell envelope biogenesis, maintenance of cell envelope integrity and membrane homeostasis. This is Inner membrane-spanning protein YciB from Rickettsia massiliae (strain Mtu5).